A 92-amino-acid chain; its full sequence is Small ribosomal subunit protein uS19 (92 aa).

It belongs to the universal ribosomal protein uS19 family.

Its function is as follows. Protein S19 forms a complex with S13 that binds strongly to the 16S ribosomal RNA. This is Small ribosomal subunit protein uS19 from Klebsiella pneumoniae (strain 342).